We begin with the raw amino-acid sequence, 304 residues long: D-alanine--D-alanine ligase (304 aa).

An ATP-grasp domain is found at 104 to 299; the sequence is KMVWLSCGLP…FEALCLAILA (196 aa). 130–185 provides a ligand contact to ATP; it reads ARDLGLPIFVKPVHEGSSMGATKVTEAGQLRAAWELAARYDSLVIAEEFISGQELT. Residues Asp253, Glu266, and Asn268 each contribute to the Mg(2+) site.

Belongs to the D-alanine--D-alanine ligase family. It depends on Mg(2+) as a cofactor. Mn(2+) serves as cofactor.

The protein localises to the cytoplasm. It carries out the reaction 2 D-alanine + ATP = D-alanyl-D-alanine + ADP + phosphate + H(+). It participates in cell wall biogenesis; peptidoglycan biosynthesis. Cell wall formation. The polypeptide is D-alanine--D-alanine ligase (Azoarcus sp. (strain BH72)).